We begin with the raw amino-acid sequence, 600 residues long: Jacalin-related lectin 18 (600 aa).

Jacalin-type lectin domains follow at residues 12 to 158 (TQRL…YFTC), 161 to 303 (PTRM…YFTT), 304 to 447 (SPFI…YFRL), and 454 to 597 (GEKV…HVLP).

This sequence belongs to the jacalin lectin family.

The sequence is that of Jacalin-related lectin 18 (JAL18) from Arabidopsis thaliana (Mouse-ear cress).